A 429-amino-acid chain; its full sequence is 3-phosphoshikimate 1-carboxyvinyltransferase (429 aa).

The 3-phosphoshikimate site is built by Lys-11, Ser-12, and Arg-16. Lys-11 is a binding site for phosphoenolpyruvate. Phosphoenolpyruvate contacts are provided by Gly-82 and Arg-110. Positions 155, 157, 302, and 329 each coordinate 3-phosphoshikimate. A phosphoenolpyruvate-binding site is contributed by Gln-157. Residue Asp-302 is the Proton acceptor of the active site. Positions 333 and 385 each coordinate phosphoenolpyruvate.

It belongs to the EPSP synthase family. In terms of assembly, monomer.

The protein resides in the cytoplasm. The enzyme catalyses 3-phosphoshikimate + phosphoenolpyruvate = 5-O-(1-carboxyvinyl)-3-phosphoshikimate + phosphate. The protein operates within metabolic intermediate biosynthesis; chorismate biosynthesis; chorismate from D-erythrose 4-phosphate and phosphoenolpyruvate: step 6/7. Catalyzes the transfer of the enolpyruvyl moiety of phosphoenolpyruvate (PEP) to the 5-hydroxyl of shikimate-3-phosphate (S3P) to produce enolpyruvyl shikimate-3-phosphate and inorganic phosphate. This Helicobacter pylori (strain HPAG1) protein is 3-phosphoshikimate 1-carboxyvinyltransferase.